Reading from the N-terminus, the 120-residue chain is uncharacterized protein (120 aa).

It is found in the mitochondrion. This is an uncharacterized protein from Arabidopsis thaliana (Mouse-ear cress).